The sequence spans 506 residues: ATP synthase subunit alpha (506 aa).

Position 171–178 (171–178 (GDRQTGKT)) interacts with ATP.

Belongs to the ATPase alpha/beta chains family. In terms of assembly, F-type ATPases have 2 components, CF(1) - the catalytic core - and CF(0) - the membrane proton channel. CF(1) has five subunits: alpha(3), beta(3), gamma(1), delta(1), epsilon(1). CF(0) has four main subunits: a(1), b(1), b'(1) and c(9-12).

It is found in the cellular thylakoid membrane. It catalyses the reaction ATP + H2O + 4 H(+)(in) = ADP + phosphate + 5 H(+)(out). Functionally, produces ATP from ADP in the presence of a proton gradient across the membrane. The alpha chain is a regulatory subunit. The chain is ATP synthase subunit alpha from Nostoc sp. (strain PCC 7120 / SAG 25.82 / UTEX 2576).